Here is a 342-residue protein sequence, read N- to C-terminus: S-methyl-5'-thioadenosine phosphorylase (342 aa).

Phosphate contacts are provided by residues Thr-51, 99–100 (RH), and 132–133 (SA). Met-234 lines the substrate pocket. Residue Ser-235 participates in phosphate binding. 258–260 (DYD) is a substrate binding site.

The protein belongs to the PNP/MTAP phosphorylase family. MTAP subfamily. As to quaternary structure, homotrimer.

It localises to the cytoplasm. Its subcellular location is the nucleus. The enzyme catalyses S-methyl-5'-thioadenosine + phosphate = 5-(methylsulfanyl)-alpha-D-ribose 1-phosphate + adenine. Its pathway is amino-acid biosynthesis; L-methionine biosynthesis via salvage pathway; S-methyl-5-thio-alpha-D-ribose 1-phosphate from S-methyl-5'-thioadenosine (phosphorylase route): step 1/1. Its function is as follows. Catalyzes the reversible phosphorylation of S-methyl-5'-thioadenosine (MTA) to adenine and 5-methylthioribose-1-phosphate. Involved in the breakdown of MTA, a major by-product of polyamine biosynthesis. Responsible for the first step in the methionine salvage pathway after MTA has been generated from S-adenosylmethionine. Has broad substrate specificity with 6-aminopurine nucleosides as preferred substrates. The polypeptide is S-methyl-5'-thioadenosine phosphorylase (Aspergillus fumigatus (strain ATCC MYA-4609 / CBS 101355 / FGSC A1100 / Af293) (Neosartorya fumigata)).